A 278-amino-acid chain; its full sequence is Betaine--homocysteine S-methyltransferase 1 (278 aa).

In terms of domain architecture, Hcy-binding spans 11–278; that stretch reads KGILERLNSG…FGLEPRVATR (268 aa). An N6-succinyllysine mark is found at Lys40, Lys93, and Lys98. Cys217 serves as a coordination point for Zn(2+). N6-succinyllysine occurs at positions 232 and 241.

As to quaternary structure, homotetramer. Zn(2+) serves as cofactor. Found exclusively in liver and kidney.

The protein localises to the cytoplasm. It localises to the cytosol. Its subcellular location is the nucleus. The catalysed reaction is L-homocysteine + glycine betaine = N,N-dimethylglycine + L-methionine. It functions in the pathway amine and polyamine degradation; betaine degradation; sarcosine from betaine: step 1/2. The protein operates within amino-acid biosynthesis; L-methionine biosynthesis via de novo pathway; L-methionine from L-homocysteine (BhmT route): step 1/1. Inhibited by dimethylglycine and methylthioacetate. In terms of biological role, involved in the regulation of homocysteine metabolism. Converts betaine and homocysteine to dimethylglycine and methionine, respectively. This reaction is also required for the irreversible oxidation of choline. The polypeptide is Betaine--homocysteine S-methyltransferase 1 (Sus scrofa (Pig)).